The chain runs to 174 residues: von Hippel-Lindau tumor suppressor homolog (174 aa).

Belongs to the VHL family. Interacts with hif-1 (hydroxylated on 'Pro-621'); the interaction induces hif-1 degradation. May be a component of the cullin E3 ubiquitin ligase complex.

Its pathway is protein modification; protein ubiquitination. In terms of biological role, involved in the response to variation in environmental oxygen levels by targeting the hypoxia-inducible transcription factor hif-1 for proteasomal degradation when oxygen levels are normal (around 20%). By regulating hif-1 expression, plays a role in iron homeostasis, aging, heat acclimation and progeny size. Mediates resistance to enteropathogenic E.coli. Mediates susceptibility to B.thuringiensis pore-forming toxins. Not involved in P.aeruginosa susceptibility. This chain is von Hippel-Lindau tumor suppressor homolog, found in Caenorhabditis elegans.